Consider the following 173-residue polypeptide: NADH-quinone oxidoreductase subunit B 1 (173 aa).

Residues C42, C43, C107, and C137 each coordinate [4Fe-4S] cluster.

This sequence belongs to the complex I 20 kDa subunit family. As to quaternary structure, NDH-1 is composed of 14 different subunits. Subunits NuoB, C, D, E, F, and G constitute the peripheral sector of the complex. [4Fe-4S] cluster serves as cofactor.

It localises to the cell inner membrane. It catalyses the reaction a quinone + NADH + 5 H(+)(in) = a quinol + NAD(+) + 4 H(+)(out). In terms of biological role, NDH-1 shuttles electrons from NADH, via FMN and iron-sulfur (Fe-S) centers, to quinones in the respiratory chain. The immediate electron acceptor for the enzyme in this species is believed to be ubiquinone. Couples the redox reaction to proton translocation (for every two electrons transferred, four hydrogen ions are translocated across the cytoplasmic membrane), and thus conserves the redox energy in a proton gradient. The chain is NADH-quinone oxidoreductase subunit B 1 from Anaeromyxobacter sp. (strain K).